The following is a 606-amino-acid chain: Transmembrane 9 superfamily member 1 (606 aa).

Residues M1–G27 form the signal peptide. N-linked (GlcNAc...) asparagine glycosylation occurs at N178. Helical transmembrane passes span L237–L257, V310–L330, G339–V359, and V373–V393. N401 carries an N-linked (GlcNAc...) asparagine glycan. The next 4 membrane-spanning stretches (helical) occupy residues I412 to I432, V469 to V489, G499 to L519, and S535 to A555. N559 is a glycosylation site (N-linked (GlcNAc...) asparagine). The helical transmembrane segment at F570–F590 threads the bilayer.

The protein belongs to the nonaspanin (TM9SF) (TC 9.A.2) family.

The protein resides in the lysosome membrane. Its subcellular location is the cytoplasmic vesicle. The protein localises to the autophagosome membrane. Its function is as follows. Plays an essential role in autophagy. The sequence is that of Transmembrane 9 superfamily member 1 (TM9SF1) from Pongo abelii (Sumatran orangutan).